Reading from the N-terminus, the 587-residue chain is Phosphatidate phosphatase APP1 (587 aa).

2 disordered regions span residues 1–28 and 150–178; these read MNSQ…RMGK and PPHL…SENR. 2 stretches are compositionally biased toward low complexity: residues 9 to 22 and 163 to 174; these read SSSS…PTSG and SQSSIESSLSSK. Residues 281–285 carry the DXDXT motif motif; sequence DIDDT. Residues 452-521 are disordered; sequence QQRPMQMTKS…NRQLPNLDAN (70 aa). The segment at 467–483 is interaction with SH3 domain of ABP1; it reads RRPPPPPIPSTQKPSLT.

As to quaternary structure, monomer. Interacts with ABP1. Requires Mg(2+) as cofactor. Post-translationally, N-glycosylated.

It localises to the cytoplasm. It is found in the cytoskeleton. Its subcellular location is the actin patch. The catalysed reaction is a 1,2-diacyl-sn-glycero-3-phosphate + H2O = a 1,2-diacyl-sn-glycerol + phosphate. The enzyme catalyses 1,2-di-(9Z-octadecenoyl)-sn-glycero-3-phosphate + H2O = 1,2-di-(9Z-octadecenoyl)-sn-glycerol + phosphate. Its activity is regulated as follows. Inhibited by N-ethylmaleimide. In terms of biological role, mg(2+)-dependent phosphatidate (PA) phosphatase which catalyzes the dephosphorylation of PA to yield diacylglycerol. May play a role in vesicular trafficking through its PAP activity at cortical actin patches. Can also utilize diacylglycerol pyrophosphate and lyso-PA as substrates with specificity constants 4- and 7-fold lower, respectively, when compared with PA. This is Phosphatidate phosphatase APP1 (APP1) from Saccharomyces cerevisiae (strain ATCC 204508 / S288c) (Baker's yeast).